The chain runs to 206 residues: N-(5'-phosphoribosyl)anthranilate isomerase (206 aa).

This sequence belongs to the TrpF family.

The catalysed reaction is N-(5-phospho-beta-D-ribosyl)anthranilate = 1-(2-carboxyphenylamino)-1-deoxy-D-ribulose 5-phosphate. Its pathway is amino-acid biosynthesis; L-tryptophan biosynthesis; L-tryptophan from chorismate: step 3/5. In Pseudomonas savastanoi pv. phaseolicola (strain 1448A / Race 6) (Pseudomonas syringae pv. phaseolicola (strain 1448A / Race 6)), this protein is N-(5'-phosphoribosyl)anthranilate isomerase.